Here is a 230-residue protein sequence, read N- to C-terminus: Cytidylate kinase (230 aa).

12-20 (GPSGAGKGT) contributes to the ATP binding site.

It belongs to the cytidylate kinase family. Type 1 subfamily.

Its subcellular location is the cytoplasm. It catalyses the reaction CMP + ATP = CDP + ADP. It carries out the reaction dCMP + ATP = dCDP + ADP. The polypeptide is Cytidylate kinase (Shewanella loihica (strain ATCC BAA-1088 / PV-4)).